The sequence spans 1317 residues: Toxin protein Tse5 (1317 aa).

Residues 395–419 form a disordered region; the sequence is GRETRRRRDGQGRMLEEESPGKARY. Over residues 403–415 the composition is skewed to basic and acidic residues; that stretch reads DGQGRMLEEESPG.

Toxin secreted by the H1 type VI (H1-T6SS) secretion system that acts on bacterial target cells. The producing bacterium is protected by a cognate immunity protein. The polypeptide is Toxin protein Tse5 (Pseudomonas aeruginosa (strain ATCC 15692 / DSM 22644 / CIP 104116 / JCM 14847 / LMG 12228 / 1C / PRS 101 / PAO1)).